The following is a 368-amino-acid chain: Tetraacyldisaccharide 4'-kinase (368 aa).

ATP is bound at residue 66–73; sequence TVGGTGKT.

Belongs to the LpxK family.

The enzyme catalyses a lipid A disaccharide + ATP = a lipid IVA + ADP + H(+). It functions in the pathway glycolipid biosynthesis; lipid IV(A) biosynthesis; lipid IV(A) from (3R)-3-hydroxytetradecanoyl-[acyl-carrier-protein] and UDP-N-acetyl-alpha-D-glucosamine: step 6/6. Functionally, transfers the gamma-phosphate of ATP to the 4'-position of a tetraacyldisaccharide 1-phosphate intermediate (termed DS-1-P) to form tetraacyldisaccharide 1,4'-bis-phosphate (lipid IVA). The sequence is that of Tetraacyldisaccharide 4'-kinase from Desulfatibacillum aliphaticivorans.